The following is a 114-amino-acid chain: Aspartate 1-decarboxylase (114 aa).

Serine 25 functions as the Schiff-base intermediate with substrate; via pyruvic acid in the catalytic mechanism. Serine 25 is subject to Pyruvic acid (Ser). Position 57 (threonine 57) interacts with substrate. The active-site Proton donor is tyrosine 58. Substrate is bound at residue 73–75; it reads GAA.

The protein belongs to the PanD family. Heterooctamer of four alpha and four beta subunits. Pyruvate serves as cofactor. Is synthesized initially as an inactive proenzyme, which is activated by self-cleavage at a specific serine bond to produce a beta-subunit with a hydroxyl group at its C-terminus and an alpha-subunit with a pyruvoyl group at its N-terminus.

It localises to the cytoplasm. It catalyses the reaction L-aspartate + H(+) = beta-alanine + CO2. It participates in cofactor biosynthesis; (R)-pantothenate biosynthesis; beta-alanine from L-aspartate: step 1/1. In terms of biological role, catalyzes the pyruvoyl-dependent decarboxylation of aspartate to produce beta-alanine. The protein is Aspartate 1-decarboxylase of Thermotoga sp. (strain RQ2).